The sequence spans 1412 residues: DNA-directed RNA polymerase subunit beta' (1412 aa).

Cysteine 70, cysteine 72, cysteine 85, and cysteine 88 together coordinate Zn(2+). Aspartate 460, aspartate 462, and aspartate 464 together coordinate Mg(2+). The Zn(2+) site is built by cysteine 814, cysteine 888, cysteine 895, and cysteine 898. The disordered stretch occupies residues glutamate 1378–glutamate 1412.

The protein belongs to the RNA polymerase beta' chain family. The RNAP catalytic core consists of 2 alpha, 1 beta, 1 beta' and 1 omega subunit. When a sigma factor is associated with the core the holoenzyme is formed, which can initiate transcription. Mg(2+) serves as cofactor. The cofactor is Zn(2+).

It catalyses the reaction RNA(n) + a ribonucleoside 5'-triphosphate = RNA(n+1) + diphosphate. Functionally, DNA-dependent RNA polymerase catalyzes the transcription of DNA into RNA using the four ribonucleoside triphosphates as substrates. In Bordetella petrii (strain ATCC BAA-461 / DSM 12804 / CCUG 43448), this protein is DNA-directed RNA polymerase subunit beta'.